The following is a 258-amino-acid chain: Ribosomal RNA small subunit methyltransferase A (258 aa).

Residues H13, L15, G40, E61, D86, and N106 each contribute to the S-adenosyl-L-methionine site.

The protein belongs to the class I-like SAM-binding methyltransferase superfamily. rRNA adenine N(6)-methyltransferase family. RsmA subfamily.

The protein resides in the cytoplasm. The enzyme catalyses adenosine(1518)/adenosine(1519) in 16S rRNA + 4 S-adenosyl-L-methionine = N(6)-dimethyladenosine(1518)/N(6)-dimethyladenosine(1519) in 16S rRNA + 4 S-adenosyl-L-homocysteine + 4 H(+). Its function is as follows. Specifically dimethylates two adjacent adenosines (A1518 and A1519) in the loop of a conserved hairpin near the 3'-end of 16S rRNA in the 30S particle. May play a critical role in biogenesis of 30S subunits. The polypeptide is Ribosomal RNA small subunit methyltransferase A (Coxiella burnetii (strain CbuG_Q212) (Coxiella burnetii (strain Q212))).